The following is a 211-amino-acid chain: Probable transcription repressor protein RGM1 (211 aa).

Residues 6–11 (PKRNKD) carry the Nuclear localization signal motif. C2H2-type zinc fingers lie at residues 19–44 (YRCV…IRKH) and 50–73 (FQCN…SSVH). The disordered stretch occupies residues 178–211 (NIVELPPDSSDTPASPSKVQSFDQAKDASPNAKK). Residues 183 to 194 (PPDSSDTPASPS) show a composition bias toward low complexity.

The protein resides in the nucleus. The protein is Probable transcription repressor protein RGM1 (RGM1) of Saccharomyces cerevisiae (strain ATCC 204508 / S288c) (Baker's yeast).